The following is a 223-amino-acid chain: Phosphoribosylformylglycinamidine synthase subunit PurQ (223 aa).

The Glutamine amidotransferase type-1 domain maps to 2–223 (KFAVIQFPGS…ASVLKNFVGK (222 aa)). C86 serves as the catalytic Nucleophile. Catalysis depends on residues H195 and E197.

As to quaternary structure, part of the FGAM synthase complex composed of 1 PurL, 1 PurQ and 2 PurS subunits.

The protein resides in the cytoplasm. It catalyses the reaction N(2)-formyl-N(1)-(5-phospho-beta-D-ribosyl)glycinamide + L-glutamine + ATP + H2O = 2-formamido-N(1)-(5-O-phospho-beta-D-ribosyl)acetamidine + L-glutamate + ADP + phosphate + H(+). The catalysed reaction is L-glutamine + H2O = L-glutamate + NH4(+). The protein operates within purine metabolism; IMP biosynthesis via de novo pathway; 5-amino-1-(5-phospho-D-ribosyl)imidazole from N(2)-formyl-N(1)-(5-phospho-D-ribosyl)glycinamide: step 1/2. Functionally, part of the phosphoribosylformylglycinamidine synthase complex involved in the purines biosynthetic pathway. Catalyzes the ATP-dependent conversion of formylglycinamide ribonucleotide (FGAR) and glutamine to yield formylglycinamidine ribonucleotide (FGAM) and glutamate. The FGAM synthase complex is composed of three subunits. PurQ produces an ammonia molecule by converting glutamine to glutamate. PurL transfers the ammonia molecule to FGAR to form FGAM in an ATP-dependent manner. PurS interacts with PurQ and PurL and is thought to assist in the transfer of the ammonia molecule from PurQ to PurL. This is Phosphoribosylformylglycinamidine synthase subunit PurQ from Lactococcus lactis subsp. lactis (strain IL1403) (Streptococcus lactis).